The sequence spans 426 residues: Tektin-1 (426 aa).

Coiled coils occupy residues Lys-21–Leu-84, Leu-268–Glu-307, and Lys-339–Ile-383. The segment at Ser-396–Asp-426 is disordered.

Belongs to the tektin family. As to quaternary structure, microtubule inner protein component of sperm flagellar doublet microtubules. Post-translationally, ubiquitinated, leading to its degradation. Deubiquitinated by USP16, promoting its stability.

The protein resides in the cytoplasm. The protein localises to the cytoskeleton. Its subcellular location is the cilium axoneme. It localises to the flagellum axoneme. Microtubule inner protein (MIP) part of the dynein-decorated doublet microtubules (DMTs) in cilia and flagellar axoneme. Forms filamentous polymers in the walls of ciliary and flagellar microtubules. The sequence is that of Tektin-1 (TEKT1) from Canis lupus familiaris (Dog).